Consider the following 459-residue polypeptide: MTNYAIILAAGKGTRMKSDLPKVLHKVAGISMLEHVFRSVNAINPEKTVTVIGHKAELVEQVLAGQTEFVRQTEQLGTGHAVMMAEPVLENLTGQTLVIAGDTPLITGESLKNLIDFHINHKNVATILTAEADNPFGYGRIVRNQHGEVLKIVEQKDASDFEQQIKEINTGTYVFDNARLFEALKNINTNNAQGEYYITDVIGIFRENGEKVGAYTLKDFDESLGVNDRVALATAESVMRRRINQKHMVNGVSFVNPDATYIDVDVEIAPEVQVEANVTLKGQTKIGAETILTNGTYIVDSVIGERTVITNSMIEESSVADGVTVGPYAHIRPGSSLAKDVHVGNFVEVKGSSIGENTKAGHLTYIGNSEVGANVNFGAGTITVNYDGQKKYKTIIGANVFVGSNSTIIAPVELGDNSLVGAGSTITKDVPADAIALGRGRQINKEDYAKRLPHHPQNK.

Residues 1–229 form a pyrophosphorylase region; that stretch reads MTNYAIILAA…FDESLGVNDR (229 aa). Residues 8-11, K22, Q72, and 77-78 each bind UDP-N-acetyl-alpha-D-glucosamine; these read LAAG and GT. D102 provides a ligand contact to Mg(2+). Residues G139, E154, N169, and N227 each contribute to the UDP-N-acetyl-alpha-D-glucosamine site. A Mg(2+)-binding site is contributed by N227. The segment at 230–250 is linker; that stretch reads VALATAESVMRRRINQKHMVN. The N-acetyltransferase stretch occupies residues 251–459; it reads GVSFVNPDAT…KRLPHHPQNK (209 aa). The UDP-N-acetyl-alpha-D-glucosamine site is built by R332 and K350. The active-site Proton acceptor is H362. Residues Y365 and N376 each coordinate UDP-N-acetyl-alpha-D-glucosamine. Acetyl-CoA-binding positions include A379, 385-386, S404, A422, and R439; that span reads NY.

The protein in the N-terminal section; belongs to the N-acetylglucosamine-1-phosphate uridyltransferase family. It in the C-terminal section; belongs to the transferase hexapeptide repeat family. In terms of assembly, homotrimer. It depends on Mg(2+) as a cofactor.

It is found in the cytoplasm. It carries out the reaction alpha-D-glucosamine 1-phosphate + acetyl-CoA = N-acetyl-alpha-D-glucosamine 1-phosphate + CoA + H(+). The enzyme catalyses N-acetyl-alpha-D-glucosamine 1-phosphate + UTP + H(+) = UDP-N-acetyl-alpha-D-glucosamine + diphosphate. It participates in nucleotide-sugar biosynthesis; UDP-N-acetyl-alpha-D-glucosamine biosynthesis; N-acetyl-alpha-D-glucosamine 1-phosphate from alpha-D-glucosamine 6-phosphate (route II): step 2/2. Its pathway is nucleotide-sugar biosynthesis; UDP-N-acetyl-alpha-D-glucosamine biosynthesis; UDP-N-acetyl-alpha-D-glucosamine from N-acetyl-alpha-D-glucosamine 1-phosphate: step 1/1. The protein operates within bacterial outer membrane biogenesis; LPS lipid A biosynthesis. Catalyzes the last two sequential reactions in the de novo biosynthetic pathway for UDP-N-acetylglucosamine (UDP-GlcNAc). The C-terminal domain catalyzes the transfer of acetyl group from acetyl coenzyme A to glucosamine-1-phosphate (GlcN-1-P) to produce N-acetylglucosamine-1-phosphate (GlcNAc-1-P), which is converted into UDP-GlcNAc by the transfer of uridine 5-monophosphate (from uridine 5-triphosphate), a reaction catalyzed by the N-terminal domain. This Streptococcus gordonii (strain Challis / ATCC 35105 / BCRC 15272 / CH1 / DL1 / V288) protein is Bifunctional protein GlmU.